We begin with the raw amino-acid sequence, 627 residues long: Protein fem-1 homolog B (627 aa).

ANK repeat units follow at residues 45-74 (QRSTPLIIAARNGHAKVVRLLLEHYRVQTQ), 87-116 (DGATALWCAAGAGHFEVVKLLVSHGANVNH), 120-149 (TNSTPLRAACFDGRLDIVKYLVENNANISI), and 153-182 (YDNTCLMIAAYKGHTDVVRYLLEQRADPNA). Residues histidine 185, cysteine 186, and histidine 218 each coordinate Zn(2+). ANK repeat units lie at residues 186 to 215 (CGATALHFAAEAGHIDIVKELIKWRAAIVV) and 218 to 248 (HGMTPLKVAAESCKADVVELLLSHADCDRRS). A TPR repeat occupies 344-377 (SHPIIYRGAVYADNMEFEQCIKLWLHALHLRQKG). ANK repeat units follow at residues 483 to 527 (EGFT…EVNA) and 531 to 568 (EGNSALHIIVQYNRPISDFLTLHSIIISLVEAGAHTDM).

This sequence belongs to the fem-1 family. Component of a CRL2 E3 ubiquitin-protein ligase complex, also named ECS (Elongin BC-CUL2/5-SOCS-box protein) complex, composed of CUL2, Elongin BC (ELOB and ELOC), RBX1 and substrate-specific adapter FEM1B. Homooligomer. Interacts with PPM1F and PHTF1. Interacts with the death domain of FAS/TNFRSF6 and TNFRSF1A. Interacts with CHEK1. Interacts with NKX3-1. Widely expressed. Highly expressed in testis. Weakly expressed in other tissues.

It localises to the cytoplasm. Its subcellular location is the nucleus. The protein operates within protein modification; protein ubiquitination. With respect to regulation, activity of the CRL2(FEM1B) complex toward FNIP1 is inhibited by BEX family proteins (BEX1, BEX2, BEX3, BEX4 and/or BEX5) in absence of reductive stress. Mechanistically, BEX proteins act as pseudosubstrate inhibitors that associate with FEM1B via zinc in absence of reductive stress, thereby preventing association between FEM1B and FNIP1. Functionally, substrate-recognition component of a Cul2-RING (CRL2) E3 ubiquitin-protein ligase complex of the DesCEND (destruction via C-end degrons) pathway, which recognizes a C-degron located at the extreme C terminus of target proteins, leading to their ubiquitination and degradation. The C-degron recognized by the DesCEND pathway is usually a motif of less than ten residues and can be present in full-length proteins, truncated proteins or proteolytically cleaved forms. The CRL2(FEM1B) complex specifically recognizes proteins ending with -Gly-Leu-Asp-Arg, such as CDK5R1, leading to their ubiquitination and degradation. Also acts as a regulator of the reductive stress response by mediating ubiquitination of reduced FNIP1: in response to reductive stress, the CRL2(FEM1B) complex specifically recognizes a conserved Cys degron in FNIP1 when this degron is reduced, leading to FNIP1 degradation and subsequent activation of mitochondria to recalibrate reactive oxygen species (ROS). Mechanistically, recognizes and binds reduced FNIP1 through two interface zinc ions, which act as a molecular glue that recruit reduced FNIP1 to FEM1B. Promotes ubiquitination of GLI1, suppressing GLI1 transcriptional activator activity. Promotes ubiquitination and degradation of ANKRD37. Promotes ubiquitination and degradation of SLBP. Involved in apoptosis by acting as a death receptor-associated protein that mediates apoptosis. Also involved in glucose homeostasis in pancreatic islet. May also act as an adapter/mediator in replication stress-induced signaling that leads to the activation of CHEK1. In Homo sapiens (Human), this protein is Protein fem-1 homolog B.